Here is a 992-residue protein sequence, read N- to C-terminus: Probable RNA-dependent RNA polymerase 3 (992 aa).

Residues 88-113 (PRLSPGESPVQSPRTPAKKSCRASQD) form a disordered region.

It belongs to the RdRP family.

It catalyses the reaction RNA(n) + a ribonucleoside 5'-triphosphate = RNA(n+1) + diphosphate. In terms of biological role, probably involved in the RNA silencing pathway and required for the generation of small interfering RNAs (siRNAs). This Arabidopsis thaliana (Mouse-ear cress) protein is Probable RNA-dependent RNA polymerase 3 (RDR3).